Consider the following 356-residue polypeptide: tRNA N6-adenosine threonylcarbamoyltransferase (356 aa).

2 residues coordinate Fe cation: His115 and His119. Residues 138–142 (LVSGG), Asp171, Gly184, and Asn283 contribute to the substrate site. Asp311 serves as a coordination point for Fe cation.

The protein belongs to the KAE1 / TsaD family. It depends on Fe(2+) as a cofactor.

It is found in the cytoplasm. It catalyses the reaction L-threonylcarbamoyladenylate + adenosine(37) in tRNA = N(6)-L-threonylcarbamoyladenosine(37) in tRNA + AMP + H(+). Functionally, required for the formation of a threonylcarbamoyl group on adenosine at position 37 (t(6)A37) in tRNAs that read codons beginning with adenine. Is involved in the transfer of the threonylcarbamoyl moiety of threonylcarbamoyl-AMP (TC-AMP) to the N6 group of A37, together with TsaE and TsaB. TsaD likely plays a direct catalytic role in this reaction. In Prochlorococcus marinus (strain NATL2A), this protein is tRNA N6-adenosine threonylcarbamoyltransferase.